Here is a 490-residue protein sequence, read N- to C-terminus: WD repeat-containing protein JIP5 (490 aa).

WD repeat units lie at residues lysine 23 to glutamine 64, glutamine 70 to arginine 112, proline 118 to aspartate 155, serine 157 to lysine 196, aspartate 242 to glutamine 284, serine 286 to asparagine 327, and glycine 340 to glutamate 377. Residues serine 368–leucine 490 are disordered. 2 stretches are compositionally biased toward acidic residues: residues glutamate 370–aspartate 406 and glutamate 413–threonine 437. Over residues glutamate 438–serine 448 the composition is skewed to basic and acidic residues. A compositionally biased stretch (polar residues) spans lysine 450–lysine 461. Over residues lysine 469–isoleucine 484 the composition is skewed to basic residues.

Belongs to the WD repeat WDR55 family.

Its subcellular location is the nucleus. It is found in the nucleolus. The chain is WD repeat-containing protein JIP5 (JIP5) from Meyerozyma guilliermondii (strain ATCC 6260 / CBS 566 / DSM 6381 / JCM 1539 / NBRC 10279 / NRRL Y-324) (Yeast).